We begin with the raw amino-acid sequence, 293 residues long: Ribosomal protein L11 methyltransferase (293 aa).

Positions 145, 166, 188, and 230 each coordinate S-adenosyl-L-methionine.

The protein belongs to the methyltransferase superfamily. PrmA family.

Its subcellular location is the cytoplasm. It carries out the reaction L-lysyl-[protein] + 3 S-adenosyl-L-methionine = N(6),N(6),N(6)-trimethyl-L-lysyl-[protein] + 3 S-adenosyl-L-homocysteine + 3 H(+). Functionally, methylates ribosomal protein L11. The polypeptide is Ribosomal protein L11 methyltransferase (Shewanella woodyi (strain ATCC 51908 / MS32)).